The sequence spans 358 residues: Peptide chain release factor 1 (358 aa).

Gln-235 is subject to N5-methylglutamine.

It belongs to the prokaryotic/mitochondrial release factor family. Methylated by PrmC. Methylation increases the termination efficiency of RF1.

The protein localises to the cytoplasm. Its function is as follows. Peptide chain release factor 1 directs the termination of translation in response to the peptide chain termination codons UAG and UAA. The protein is Peptide chain release factor 1 of Neisseria meningitidis serogroup B (strain ATCC BAA-335 / MC58).